The primary structure comprises 906 residues: Protein translocase subunit SecA (906 aa).

ATP is bound by residues Q89, 107–111 (GEGKT), and D501. Zn(2+)-binding residues include C891, C893, C902, and H903.

The protein belongs to the SecA family. Monomer and homodimer. Part of the essential Sec protein translocation apparatus which comprises SecA, SecYEG and auxiliary proteins SecDF-YajC and YidC. Requires Zn(2+) as cofactor.

The protein localises to the cell inner membrane. It is found in the cytoplasm. It carries out the reaction ATP + H2O + cellular proteinSide 1 = ADP + phosphate + cellular proteinSide 2.. Part of the Sec protein translocase complex. Interacts with the SecYEG preprotein conducting channel. Has a central role in coupling the hydrolysis of ATP to the transfer of proteins into and across the cell membrane, serving both as a receptor for the preprotein-SecB complex and as an ATP-driven molecular motor driving the stepwise translocation of polypeptide chains across the membrane. This is Protein translocase subunit SecA from Parvibaculum lavamentivorans (strain DS-1 / DSM 13023 / NCIMB 13966).